A 458-amino-acid chain; its full sequence is Preferentially expressed antigen in melanoma-like protein 1 (458 aa).

An LRR 1; degenerate repeat occupies 99-126 (RCKLQVLDLRVMPLKLWNRLPVFGTAGC). One copy of the LRR 2; degenerate repeat lies at 176-200 (SLCCCKLQIWAMSMYYHRKLLEILD). The stretch at 201–227 (LDSVQELRMYCISNPVCLLNFAPYLGR) is one LRR 3; degenerate repeat. An LRR 4; degenerate repeat occupies 228-263 (MRNLRCLILSHLWQTFSMTPVEKQQVITQFTSQFLK). 5 LRR repeats span residues 264 to 289 (LKCL…FWWL), 290 to 321 (KTPL…SQLK), 322 to 340 (HLNL…PLRV), 346 to 373 (ASTL…ALRC), and 374 to 398 (CTQL…LAYN).

The protein belongs to the PRAME family. Specifically expressed in testis (at protein level).

The protein localises to the cytoplasm. The protein resides in the cytoplasmic vesicle. It is found in the secretory vesicle. It localises to the acrosome. Its subcellular location is the cell projection. The protein localises to the cilium. The protein resides in the flagellum. May play a role in acrosome development and also in sperm maturation and motility. This chain is Preferentially expressed antigen in melanoma-like protein 1, found in Mus musculus (Mouse).